We begin with the raw amino-acid sequence, 198 residues long: Recombination protein RecR (198 aa).

The C4-type zinc-finger motif lies at 57–72 (CSVCGHITDQDPCAIC). The Toprim domain occupies 80–175 (SLICVVQDPK…RTTRIAHGLP (96 aa)).

It belongs to the RecR family.

May play a role in DNA repair. It seems to be involved in an RecBC-independent recombinational process of DNA repair. It may act with RecF and RecO. The sequence is that of Recombination protein RecR from Oceanobacillus iheyensis (strain DSM 14371 / CIP 107618 / JCM 11309 / KCTC 3954 / HTE831).